Consider the following 172-residue polypeptide: 3-hydroxydecanoyl-[acyl-carrier-protein] dehydratase (172 aa).

The active site involves His-71.

This sequence belongs to the thioester dehydratase family. FabA subfamily. In terms of assembly, homodimer.

The protein localises to the cytoplasm. The enzyme catalyses a (3R)-hydroxyacyl-[ACP] = a (2E)-enoyl-[ACP] + H2O. The catalysed reaction is (3R)-hydroxydecanoyl-[ACP] = (2E)-decenoyl-[ACP] + H2O. It carries out the reaction (2E)-decenoyl-[ACP] = (3Z)-decenoyl-[ACP]. The protein operates within lipid metabolism; fatty acid biosynthesis. Necessary for the introduction of cis unsaturation into fatty acids. Catalyzes the dehydration of (3R)-3-hydroxydecanoyl-ACP to E-(2)-decenoyl-ACP and then its isomerization to Z-(3)-decenoyl-ACP. Can catalyze the dehydratase reaction for beta-hydroxyacyl-ACPs with saturated chain lengths up to 16:0, being most active on intermediate chain length. This chain is 3-hydroxydecanoyl-[acyl-carrier-protein] dehydratase, found in Pectobacterium carotovorum subsp. carotovorum (strain PC1).